A 124-amino-acid chain; its full sequence is Fluoride-specific ion channel FluC (124 aa).

The next 4 helical transmembrane spans lie at 5–25, 32–52, 67–87, and 96–116; these read VYIA…SGFV, SFPY…GLIM, FAIT…SFET, and LLIA…CTWI. The Na(+) site is built by Gly75 and Thr78.

The protein belongs to the fluoride channel Fluc/FEX (TC 1.A.43) family.

It is found in the cell inner membrane. It catalyses the reaction fluoride(in) = fluoride(out). Na(+) is not transported, but it plays an essential structural role and its presence is essential for fluoride channel function. Functionally, fluoride-specific ion channel. Important for reducing fluoride concentration in the cell, thus reducing its toxicity. This Citrifermentans bemidjiense (strain ATCC BAA-1014 / DSM 16622 / JCM 12645 / Bem) (Geobacter bemidjiensis) protein is Fluoride-specific ion channel FluC.